We begin with the raw amino-acid sequence, 321 residues long: Tetraacyldisaccharide 4'-kinase (321 aa).

Position 54-61 (54-61) interacts with ATP; it reads SVGGTGKT.

This sequence belongs to the LpxK family.

The catalysed reaction is a lipid A disaccharide + ATP = a lipid IVA + ADP + H(+). The protein operates within glycolipid biosynthesis; lipid IV(A) biosynthesis; lipid IV(A) from (3R)-3-hydroxytetradecanoyl-[acyl-carrier-protein] and UDP-N-acetyl-alpha-D-glucosamine: step 6/6. In terms of biological role, transfers the gamma-phosphate of ATP to the 4'-position of a tetraacyldisaccharide 1-phosphate intermediate (termed DS-1-P) to form tetraacyldisaccharide 1,4'-bis-phosphate (lipid IVA). In Rickettsia conorii (strain ATCC VR-613 / Malish 7), this protein is Tetraacyldisaccharide 4'-kinase.